Consider the following 596-residue polypeptide: MLPAHKLTLETLLAETVKQVATASQGASEAAFVSPAITLERPKVAAHGDVACNVAMQLAKPLRANPRQLAQQIVDALLAQPQAKGLVEAAEVAGPGFINLRLAAAAKQAVIAAVFAEKEAFGRSQRDAGKHVLIEFVSANPTGPLHVGHGRQAALGDALSNVLASQGYDVHREFYYNDAGVQIQTLALSTQARARGLAPGDAGWPASAYNGEYIAEIARDYLNGVTVAASDGEPVTGARDVEDLEAIRRFAVAYLRREQDMDLQAFGVKFDQYYLESSLYKEGRVEKTVEALIAAGKTYEQEGALWLRTTDDGDDKDRVMRKTDGTYTYFVPDVAYHVAKWERGFTKVINVQGSDHHGTIARVRAGLQGLGVGIPKGYPDYILHKMVTVMRNGEEVKISKRAGSYVTVRDLIEWSGGATPGSEAAVDLIDEETIRRGRDAVRFFLISRKADTEFVFDIDLALKQNDENPVHYVQYAHARICSVIAECKARYSTDESTLADVDVSPLTSERAMALLNKLAEFPDMLQHAADELAPHAVAFYLRDLAGEFHSFYNDRTERVLVDDAAERNARVALLAATRQVLANGLATIGVSAPVKM.

A 'HIGH' region motif is present at residues 139–149; the sequence is ANPTGPLHVGH.

Belongs to the class-I aminoacyl-tRNA synthetase family. In terms of assembly, monomer.

It is found in the cytoplasm. The enzyme catalyses tRNA(Arg) + L-arginine + ATP = L-arginyl-tRNA(Arg) + AMP + diphosphate. The polypeptide is Arginine--tRNA ligase (Paraburkholderia phytofirmans (strain DSM 17436 / LMG 22146 / PsJN) (Burkholderia phytofirmans)).